Consider the following 334-residue polypeptide: Transcription initiation factor IIB (334 aa).

The TFIIB-type zinc-finger motif lies at 34 to 65; sequence EELVCPMCDSKNIIKDYEKAEIVCEDCGCVLQ. Residues C38, C41, C57, and C60 each coordinate Zn(2+). A run of 2 repeats spans residues 151–234 and 245–326.

The protein belongs to the TFIIB family.

Functionally, stabilizes TBP binding to an archaeal box-A promoter. Also responsible for recruiting RNA polymerase II to the pre-initiation complex (DNA-TBP-TFIIB). In Methanococcus aeolicus (strain ATCC BAA-1280 / DSM 17508 / OCM 812 / Nankai-3), this protein is Transcription initiation factor IIB.